A 329-amino-acid polypeptide reads, in one-letter code: Anthranilate phosphoribosyltransferase (329 aa).

Residues glycine 78, 81 to 82, threonine 86, 88 to 91, 106 to 114, and serine 118 each bind 5-phospho-alpha-D-ribose 1-diphosphate; these read GD, NLST, and KHGNRSASG. Glycine 78 serves as a coordination point for anthranilate. Position 90 (serine 90) interacts with Mg(2+). Asparagine 109 is a binding site for anthranilate. Arginine 164 is a binding site for anthranilate. Residues aspartate 221 and glutamate 222 each coordinate Mg(2+).

It belongs to the anthranilate phosphoribosyltransferase family. In terms of assembly, homodimer. Mg(2+) is required as a cofactor.

The catalysed reaction is N-(5-phospho-beta-D-ribosyl)anthranilate + diphosphate = 5-phospho-alpha-D-ribose 1-diphosphate + anthranilate. It participates in amino-acid biosynthesis; L-tryptophan biosynthesis; L-tryptophan from chorismate: step 2/5. Catalyzes the transfer of the phosphoribosyl group of 5-phosphorylribose-1-pyrophosphate (PRPP) to anthranilate to yield N-(5'-phosphoribosyl)-anthranilate (PRA). The polypeptide is Anthranilate phosphoribosyltransferase (Pyrobaculum islandicum (strain DSM 4184 / JCM 9189 / GEO3)).